Here is a 597-residue protein sequence, read N- to C-terminus: MKYLLLALLLCLAVGTAGGFKIVKTCEKDPRGYIADLGNGKYLMHLEGSPYEMGYQHGCLKGAEVQSMTKEFVKSVLAGYDIPEDLIPGLLKLGKEVAKGNEKYVPSEFREEMRGIADGARDAGYDVDYDDVLLLNMGFDVILSIAYPIATPIVAWQDKKGVACDGFVAMDDATSDGRVLMGRSFMFNPEVFHEVALLIEQYPDRGHRFVSVSAPGFVGVTAAMSSAGIAIGMDMVPAMDTKPFVSGMGCLLTARQVVQYADELSDAVNMVKGSKRGVPWLYIVGDGKGREKGGAVLEVSADKFAVRYMDYRYPEWAESLDFPKQIEDKDDLVVVANHYIVPEMYSTISYAVKDSLWRYETLTGLILDSYGSIDVEKGKELIDYLHPPNYGYYGEDENVPVAATRTLFDLSNLELWSLYGMYTDPWAHWELTTEYQPAGLDKAWKDTEGDVAGPSWKPINYGAPIIDKEKMLDSADLQKLSEADGNYVEQCVKAYAGNPNYATIHLRFNVQSSANIMLTVADQNDGLEIYAWNYNTNDWQKVYDRIYPSGFTTLRLSLGSEFVNNRKADLVLISEAKWKFGMIYDKACVAVDAAAVT.

2 helical membrane passes run leucine 4–valine 23 and phenylalanine 209–isoleucine 231.

It localises to the cell membrane. This is an uncharacterized protein from Archaeoglobus fulgidus (strain ATCC 49558 / DSM 4304 / JCM 9628 / NBRC 100126 / VC-16).